A 58-amino-acid polypeptide reads, in one-letter code: Small ribosomal subunit protein bS21 (58 aa).

Belongs to the bacterial ribosomal protein bS21 family.

The protein is Small ribosomal subunit protein bS21 of Latilactobacillus sakei subsp. sakei (strain 23K) (Lactobacillus sakei subsp. sakei).